The following is a 136-amino-acid chain: Ig kappa chain V-V region MOPC 21 (136 aa).

Residues Met-1–Gly-29 form the signal peptide. The interval Asn-30–Cys-52 is framework-1. Residues Lys-53–Ser-63 form a complementarity-determining-1 region. The framework-2 stretch occupies residues Trp-64–Tyr-78. The interval Gly-79–Thr-85 is complementarity-determining-2. Residues Gly-86 to Cys-117 are framework-3. A complementarity-determining-3 region spans residues Gly-118–Thr-126. Residues Phe-127 to Lys-136 are framework-4.

The chain is Ig kappa chain V-V region MOPC 21 from Mus musculus (Mouse).